The following is a 405-amino-acid chain: 11-beta-hydroxysteroid dehydrogenase type 2 (405 aa).

Residue 82 to 111 participates in NAD(+) binding; it reads TRAVLITGCDSGFGKETAKKLDSMGFTVLA. Serine 219 serves as a coordination point for substrate. Tyrosine 232 serves as the catalytic Proton acceptor. The interval 335-339 is essential for protein stability; the sequence is RRRYY. Positions 377 to 387 are enriched in low complexity; the sequence is QPGQPGTTPPQ. Positions 377–405 are disordered; sequence QPGQPGTTPPQDAAQDPNLSPGPSPAVAR. Residues 396–405 are compositionally biased toward pro residues; sequence SPGPSPAVAR.

The protein belongs to the short-chain dehydrogenases/reductases (SDR) family. Interacts with ligand-free cytoplasmic NR3C2. As to expression, expressed in kidney, placenta, pancreas, prostate, ovary, small intestine and colon, and in lower levels in the spleen and testis. At midgestation, expressed at high levels in placenta and in fetal kidney and, at much lower levels, in fetal lung and testis.

Its subcellular location is the microsome. The protein resides in the endoplasmic reticulum. The catalysed reaction is an 11beta-hydroxysteroid + NAD(+) = an 11-oxosteroid + NADH + H(+). The enzyme catalyses cortisol + NAD(+) = cortisone + NADH + H(+). It carries out the reaction corticosterone + NAD(+) = 11-dehydrocorticosterone + NADH + H(+). It catalyses the reaction 11beta,17beta-dihydroxyandrost-4-ene-3-one + NAD(+) = 17beta-hydroxyandrost-4-ene-3,11-dione + NADH + H(+). The catalysed reaction is 11beta-hydroxyandrost-4-ene-3,17-dione + NAD(+) = androst-4-ene-3,11,17-trione + NADH + H(+). It participates in steroid metabolism. Inhibited by glycyrrhetinic acid (derived from liquorice). Functionally, catalyzes the conversion of biologically active 11beta-hydroxyglucocorticoids (11beta-hydroxysteroid) such as cortisol, to inactive 11-ketoglucocorticoids (11-oxosteroid) such as cortisone, in the presence of NAD(+). Functions as a dehydrogenase (oxidase), thereby decreasing the concentration of active glucocorticoids, thus protecting the nonselective mineralocorticoid receptor from occupation by glucocorticoids. Plays an important role in maintaining glucocorticoids balance during preimplantation and protects the fetus from excessive maternal corticosterone exposure. Catalyzes the oxidation of 11beta-hydroxytestosterone (11beta,17beta-dihydroxyandrost-4-ene-3-one) to 11-ketotestosterone (17beta-hydroxyandrost-4-ene-3,11-dione), a major bioactive androgen. Catalyzes the conversion of 11beta-hydroxyandrostenedione (11beta-hydroxyandrost-4-ene-3,17-dione) to 11-ketoandrostenedione (androst-4-ene-3,11,17-trione), which can be further metabolized to 11-ketotestosterone. Converts 7-beta-25-dihydroxycholesterol to 7-oxo-25-hydroxycholesterol in vitro. 7-beta-25-dihydroxycholesterol (not 7-oxo-25-hydroxycholesterol) acts as a ligand for the G-protein-coupled receptor (GPCR) Epstein-Barr virus-induced gene 2 (EBI2) and may thereby regulate immune cell migration. May protect ovulating oocytes and fertilizing spermatozoa from the adverse effects of cortisol. In Homo sapiens (Human), this protein is 11-beta-hydroxysteroid dehydrogenase type 2.